Reading from the N-terminus, the 29-residue chain is 28 kDa protein (29 aa).

This is 28 kDa protein from Tritrichomonas foetus (Trichomonas foetus).